Consider the following 663-residue polypeptide: DNA ligase (663 aa).

Residues 33-37 (DYSYD), 82-83 (SI), and Glu-112 each bind NAD(+). Lys-114 (N6-AMP-lysine intermediate) is an active-site residue. NAD(+) contacts are provided by Arg-135, Glu-171, Lys-285, and Lys-309. Zn(2+) contacts are provided by Cys-403, Cys-406, Cys-419, and Cys-424. Residues 581-663 (DKEAPLQGKV…SRILDAKSVS (83 aa)) enclose the BRCT domain.

This sequence belongs to the NAD-dependent DNA ligase family. LigA subfamily. The cofactor is Mg(2+). It depends on Mn(2+) as a cofactor.

It carries out the reaction NAD(+) + (deoxyribonucleotide)n-3'-hydroxyl + 5'-phospho-(deoxyribonucleotide)m = (deoxyribonucleotide)n+m + AMP + beta-nicotinamide D-nucleotide.. DNA ligase that catalyzes the formation of phosphodiester linkages between 5'-phosphoryl and 3'-hydroxyl groups in double-stranded DNA using NAD as a coenzyme and as the energy source for the reaction. It is essential for DNA replication and repair of damaged DNA. The sequence is that of DNA ligase from Chlamydia trachomatis serovar L2 (strain ATCC VR-902B / DSM 19102 / 434/Bu).